The chain runs to 269 residues: Thymidylate synthase (269 aa).

Arginine 21 contacts dUMP. Histidine 51 is a (6R)-5,10-methylene-5,6,7,8-tetrahydrofolate binding site. A dUMP-binding site is contributed by 126–127; the sequence is RR. Cysteine 146 (nucleophile) is an active-site residue. DUMP contacts are provided by residues 171–174, asparagine 182, and 212–214; these read RSGD and HLY. Aspartate 174 is a binding site for (6R)-5,10-methylene-5,6,7,8-tetrahydrofolate. Alanine 268 lines the (6R)-5,10-methylene-5,6,7,8-tetrahydrofolate pocket.

The protein belongs to the thymidylate synthase family. Bacterial-type ThyA subfamily. As to quaternary structure, homodimer.

The protein localises to the cytoplasm. The enzyme catalyses dUMP + (6R)-5,10-methylene-5,6,7,8-tetrahydrofolate = 7,8-dihydrofolate + dTMP. Its pathway is pyrimidine metabolism; dTTP biosynthesis. In terms of biological role, catalyzes the reductive methylation of 2'-deoxyuridine-5'-monophosphate (dUMP) to 2'-deoxythymidine-5'-monophosphate (dTMP) while utilizing 5,10-methylenetetrahydrofolate (mTHF) as the methyl donor and reductant in the reaction, yielding dihydrofolate (DHF) as a by-product. This enzymatic reaction provides an intracellular de novo source of dTMP, an essential precursor for DNA biosynthesis. This is Thymidylate synthase from Methylocella silvestris (strain DSM 15510 / CIP 108128 / LMG 27833 / NCIMB 13906 / BL2).